Here is a 339-residue protein sequence, read N- to C-terminus: Nicotinate-nucleotide--dimethylbenzimidazole phosphoribosyltransferase (339 aa).

The active-site Proton acceptor is Glu-306.

This sequence belongs to the CobT family.

It carries out the reaction 5,6-dimethylbenzimidazole + nicotinate beta-D-ribonucleotide = alpha-ribazole 5'-phosphate + nicotinate + H(+). The protein operates within nucleoside biosynthesis; alpha-ribazole biosynthesis; alpha-ribazole from 5,6-dimethylbenzimidazole: step 1/2. Functionally, catalyzes the synthesis of alpha-ribazole-5'-phosphate from nicotinate mononucleotide (NAMN) and 5,6-dimethylbenzimidazole (DMB). The sequence is that of Nicotinate-nucleotide--dimethylbenzimidazole phosphoribosyltransferase from Brucella melitensis biotype 2 (strain ATCC 23457).